Reading from the N-terminus, the 188-residue chain is Pro-adrenomedullin (188 aa).

Residues 1 to 21 form the signal peptide; it reads MKLVPVALLYLGSLAFLGADT. At Arg41 the chain carries Arginine amide. Positions 45-92 are excised as a propeptide; it reads ELRVSSSYPTGLAEVKAGPAQTLIRTQDVKGASRNPQTSGPDAARIRV. Cys110 and Cys115 are oxidised to a cystine. Positions 131–176 are disordered; the sequence is DKDGVAPRSKISPQGYGRRRRRSLPEPGLRRTLLFPEPRPGGAPAP. At Tyr146 the chain carries Tyrosine amide. The propeptide at 153–188 is preproAM C-terminal fragment; it reads SLPEPGLRRTLLFPEPRPGGAPAPRAHQVLANLLKM.

This sequence belongs to the adrenomedullin family.

The protein resides in the secreted. Its function is as follows. Adrenomedullin/ADM and proadrenomedullin N-20 terminal peptide/PAMP are peptide hormones that act as potent hypotensive and vasodilatator agents. Numerous actions have been reported most related to the physiologic control of fluid and electrolyte homeostasis. ADM function is mediated by the CALCRL-RAMP2 and CALCRL-RAMP3 receptor complexes with ADM showing the highest potency for the CALCRL-RAMP2 complex. This is Pro-adrenomedullin (ADM) from Canis lupus familiaris (Dog).